The primary structure comprises 777 residues: ATPase ARSA1 (777 aa).

110–117 lines the ATP pocket; the sequence is KGGVGKTS. Asp-139 is a catalytic residue. Residues Asn-372 and 454-461 each bind ATP; that span reads KGGVGKTS. Asp-483 is a catalytic residue. Asn-712 is an ATP binding site.

This sequence belongs to the arsA ATPase family. In terms of assembly, monomer. Interacts with TOC34.

The protein resides in the cytoplasm. It is found in the cytosol. In terms of biological role, ATPase required for the post-translational delivery of tail-anchored (TA) proteins to the chloroplast. Required for the accumulation of TOC34, an essential component of the outer chloroplast membrane translocon (TOC) complex. Recognizes and selectively binds the transmembrane domain of TA proteins in the cytosol. This complex then targets to chloroplast, where the tail-anchored protein is released for insertion. This process is regulated by ATP binding and hydrolysis. The sequence is that of ATPase ARSA1 from Chlamydomonas reinhardtii (Chlamydomonas smithii).